A 105-amino-acid chain; its full sequence is Cyclotide vibi-E (105 aa).

The signal sequence occupies residues 1-9; the sequence is AAFALPALA. Positions 10–69 are excised as a propeptide; it reads SSFEKDVISFRAIQAVLEKRGLSKLEDDPVLSALAHTKTIISNPVIEEALLNGANLKAGN. The segment at residues 70-99 is a cross-link (cyclopeptide (Gly-Asn)); it reads GIPCAESCVWIPCTVTALIGCGCSNKVCYN. Intrachain disulfides connect Cys73/Cys90, Cys77/Cys92, and Cys82/Cys97. A propeptide spanning residues 100–105 is cleaved from the precursor; that stretch reads SLQTKY.

This is a cyclic peptide.

Probably participates in a plant defense mechanism. Has cytotoxic activity, active against a human lymphoma cell line with an IC(50) of 3.2 uM. The protein is Cyclotide vibi-E of Viola biflora (Yellow wood violet).